A 205-amino-acid chain; its full sequence is Large ribosomal subunit protein uL3c (205 aa).

The disordered stretch occupies residues 127–153 (HFSRGPMSHGSKNHRQPGSIGAGTTPG).

The protein belongs to the universal ribosomal protein uL3 family. In terms of assembly, part of the 50S ribosomal subunit.

The protein localises to the plastid. It localises to the chloroplast. Its function is as follows. One of the primary rRNA binding proteins, it binds directly near the 3'-end of the 23S rRNA, where it nucleates assembly of the 50S subunit. The protein is Large ribosomal subunit protein uL3c (rpl3) of Porphyra purpurea (Red seaweed).